The sequence spans 274 residues: Cyclase-like protein 1 (274 aa).

The N-terminal stretch at 1 to 18 (MAASRLALLLLVLAVAAA) is a signal peptide.

Belongs to the Cyclase 1 superfamily. In terms of tissue distribution, highly expressed in leaf sheaths. Expressed in leaf collars.

It localises to the secreted. It is found in the extracellular space. The protein localises to the extracellular matrix. Its function is as follows. May be involved in response to stresses. This Oryza sativa subsp. japonica (Rice) protein is Cyclase-like protein 1.